The primary structure comprises 378 residues: uncharacterized protein (378 aa).

The span at 1 to 11 (MSPMNRQRKNK) shows a compositional bias: basic residues. The interval 1–23 (MSPMNRQRKNKSNVLNEKDERPG) is disordered.

This is an uncharacterized protein from Caenorhabditis elegans.